We begin with the raw amino-acid sequence, 264 residues long: Thymidylate synthase (264 aa).

Arginine 21 contributes to the dUMP binding site. Residue histidine 51 participates in (6R)-5,10-methylene-5,6,7,8-tetrahydrofolate binding. 126–127 (RR) contacts dUMP. Cysteine 146 functions as the Nucleophile in the catalytic mechanism. DUMP contacts are provided by residues 166-169 (RSAD), asparagine 177, and 207-209 (HLY). Aspartate 169 contributes to the (6R)-5,10-methylene-5,6,7,8-tetrahydrofolate binding site. Alanine 263 is a binding site for (6R)-5,10-methylene-5,6,7,8-tetrahydrofolate.

The protein belongs to the thymidylate synthase family. Bacterial-type ThyA subfamily. As to quaternary structure, homodimer.

The protein resides in the cytoplasm. It carries out the reaction dUMP + (6R)-5,10-methylene-5,6,7,8-tetrahydrofolate = 7,8-dihydrofolate + dTMP. It functions in the pathway pyrimidine metabolism; dTTP biosynthesis. Catalyzes the reductive methylation of 2'-deoxyuridine-5'-monophosphate (dUMP) to 2'-deoxythymidine-5'-monophosphate (dTMP) while utilizing 5,10-methylenetetrahydrofolate (mTHF) as the methyl donor and reductant in the reaction, yielding dihydrofolate (DHF) as a by-product. This enzymatic reaction provides an intracellular de novo source of dTMP, an essential precursor for DNA biosynthesis. This Mesorhizobium japonicum (strain LMG 29417 / CECT 9101 / MAFF 303099) (Mesorhizobium loti (strain MAFF 303099)) protein is Thymidylate synthase.